The sequence spans 199 residues: Dephospho-CoA kinase (199 aa).

One can recognise a DPCK domain in the interval Val-4 to Ser-199. Residue Ala-12 to Thr-17 participates in ATP binding.

Belongs to the CoaE family.

The protein localises to the cytoplasm. It carries out the reaction 3'-dephospho-CoA + ATP = ADP + CoA + H(+). The protein operates within cofactor biosynthesis; coenzyme A biosynthesis; CoA from (R)-pantothenate: step 5/5. Functionally, catalyzes the phosphorylation of the 3'-hydroxyl group of dephosphocoenzyme A to form coenzyme A. This chain is Dephospho-CoA kinase, found in Oceanobacillus iheyensis (strain DSM 14371 / CIP 107618 / JCM 11309 / KCTC 3954 / HTE831).